Reading from the N-terminus, the 129-residue chain is DNA-directed RNA polymerase subunit omega (129 aa).

A disordered region spans residues 76–100 (EVDEPEPEAVPMIASGDSSGGEDSD).

Belongs to the RNA polymerase subunit omega family. As to quaternary structure, the RNAP catalytic core consists of 2 alpha, 1 beta, 1 beta' and 1 omega subunit. When a sigma factor is associated with the core the holoenzyme is formed, which can initiate transcription.

The catalysed reaction is RNA(n) + a ribonucleoside 5'-triphosphate = RNA(n+1) + diphosphate. Its function is as follows. Promotes RNA polymerase assembly. Latches the N- and C-terminal regions of the beta' subunit thereby facilitating its interaction with the beta and alpha subunits. In Xanthobacter autotrophicus (strain ATCC BAA-1158 / Py2), this protein is DNA-directed RNA polymerase subunit omega.